A 185-amino-acid polypeptide reads, in one-letter code: ATP synthase subunit b 2 (185 aa).

Positions 1–25 are disordered; the sequence is MAESHGNAHGATAHTEADGGHKAPF. The chain crosses the membrane as a helical span at residues 34-56; the sequence is ASQLVSLTIAFVALYLISSRLAL.

Belongs to the ATPase B chain family. F-type ATPases have 2 components, F(1) - the catalytic core - and F(0) - the membrane proton channel. F(1) has five subunits: alpha(3), beta(3), gamma(1), delta(1), epsilon(1). F(0) has three main subunits: a(1), b(2) and c(10-14). The alpha and beta chains form an alternating ring which encloses part of the gamma chain. F(1) is attached to F(0) by a central stalk formed by the gamma and epsilon chains, while a peripheral stalk is formed by the delta and b chains.

It localises to the cell inner membrane. Its function is as follows. F(1)F(0) ATP synthase produces ATP from ADP in the presence of a proton or sodium gradient. F-type ATPases consist of two structural domains, F(1) containing the extramembraneous catalytic core and F(0) containing the membrane proton channel, linked together by a central stalk and a peripheral stalk. During catalysis, ATP synthesis in the catalytic domain of F(1) is coupled via a rotary mechanism of the central stalk subunits to proton translocation. Functionally, component of the F(0) channel, it forms part of the peripheral stalk, linking F(1) to F(0). The b'-subunit is a diverged and duplicated form of b found in plants and photosynthetic bacteria. This is ATP synthase subunit b 2 (atpF2) from Nitrobacter winogradskyi (strain ATCC 25391 / DSM 10237 / CIP 104748 / NCIMB 11846 / Nb-255).